Reading from the N-terminus, the 375-residue chain is Adiponectin receptor protein 1 (375 aa).

The segment at 1–60 (MSSHKGSVVAQGNGAPASNREADTVELAELGPLLEEKGKRVIANPPKAEEEQTCPVPQEE) is disordered. Topologically, residues 1–136 (MSSHKGSVVA…SIFRIHTETG (136 aa)) are cytoplasmic. A helical transmembrane segment spans residues 137–157 (NIWTHLLGFVLFLFLGILTML). At 158–170 (RPNMYFMAPLQEK) the chain is on the extracellular side. A helical membrane pass occupies residues 171–191 (VVFGMFFLGAVLCLSFSWLFH). Residue histidine 191 participates in Zn(2+) binding. The Cytoplasmic portion of the chain corresponds to 192-203 (TVYCHSEKVSRT). Residues 204-224 (FSKLDYSGIALLIMGSFVPWL) traverse the membrane as a helical segment. Over 225-234 (YYSFYCSPQP) the chain is Extracellular. A helical membrane pass occupies residues 235-255 (RLIYLSIVCVLGISAIIVAQW). Residues 256-264 (DRFATPKHR) are Cytoplasmic-facing. A helical transmembrane segment spans residues 265–285 (QTRAGVFLGLGLSGVVPTMHF). The Extracellular portion of the chain corresponds to 286–298 (TIAEGFVKATTVG). A helical membrane pass occupies residues 299-319 (QMGWFFLMAVMYITGAGLYAA). Residues 320 to 337 (RIPERFFPGKFDIWFQSH) are Cytoplasmic-facing. Residues histidine 337 and histidine 341 each contribute to the Zn(2+) site. Residues 338–358 (QIFHVLVVAAAFVHFYGVSNL) traverse the membrane as a helical segment. Residues 359-375 (QEFRYGLEGGCTDDTLL) are Extracellular-facing.

Belongs to the ADIPOR family. As to quaternary structure, may form homooligomers and heterooligomers with ADIPOR2. Interacts with APPL2 (via BAR domain); hinders the accessibility of APPL1 to ADIPOR1; negatively regulates adiponectin signaling; ADIPOQ dissociates this interaction and facilitates the recruitment of APPL1 to ADIPOR1. Interacts with APPL1; ADIPOQ enhances this interaction; inhibites adiponectin-stimulated binding of APPL2 to ADIPOR1. Widely expressed. Highly expressed in heart and skeletal muscle. Expressed at intermediate level in brain, spleen, kidney, liver, placenta, lung and peripheral blood leukocytes. Weakly expressed in colon, thymus and small intestine.

The protein resides in the cell membrane. Functionally, receptor for ADIPOQ, an essential hormone secreted by adipocytes that regulates glucose and lipid metabolism. Required for normal glucose and fat homeostasis and for maintaining a normal body weight. ADIPOQ-binding activates a signaling cascade that leads to increased AMPK activity, and ultimately to increased fatty acid oxidation, increased glucose uptake and decreased gluconeogenesis. Has high affinity for globular adiponectin and low affinity for full-length adiponectin. The polypeptide is Adiponectin receptor protein 1 (Homo sapiens (Human)).